The chain runs to 290 residues: Light-independent protochlorophyllide reductase iron-sulfur ATP-binding protein (290 aa).

ATP contacts are provided by residues 34–39 (GIGKST) and Lys-63. Ser-38 serves as a coordination point for Mg(2+). Residues Cys-119 and Cys-153 each contribute to the [4Fe-4S] cluster site. Residues 204–205 (NR) and 228–230 (PDL) each bind ATP.

The protein belongs to the NifH/BchL/ChlL family. As to quaternary structure, homodimer. Protochlorophyllide reductase is composed of three subunits; BchL, BchN and BchB. The cofactor is [4Fe-4S] cluster.

The catalysed reaction is chlorophyllide a + oxidized 2[4Fe-4S]-[ferredoxin] + 2 ADP + 2 phosphate = protochlorophyllide a + reduced 2[4Fe-4S]-[ferredoxin] + 2 ATP + 2 H2O. It participates in porphyrin-containing compound metabolism; bacteriochlorophyll biosynthesis (light-independent). Functionally, component of the dark-operative protochlorophyllide reductase (DPOR) that uses Mg-ATP and reduced ferredoxin to reduce ring D of protochlorophyllide (Pchlide) to form chlorophyllide a (Chlide). This reaction is light-independent. The L component serves as a unique electron donor to the NB-component of the complex, and binds Mg-ATP. The sequence is that of Light-independent protochlorophyllide reductase iron-sulfur ATP-binding protein from Rhodospirillum rubrum.